A 265-amino-acid polypeptide reads, in one-letter code: Probable DNA replication complex GINS protein PSF3 (265 aa).

The tract at residues 180–265 (ISTSSNNKNN…KKRKRMFDDE (86 aa)) is disordered. Positions 183–246 (SSNNKNNSSN…NNNNNSQNSS (64 aa)) are enriched in low complexity. Positions 255 to 265 (VKKRKRMFDDE) are enriched in basic residues.

Belongs to the GINS3/PSF3 family. As to quaternary structure, component of the GINS complex which is a heterotetramer of gins1, gins2, gins3 and gins4.

The protein resides in the nucleus. Its function is as follows. The GINS complex plays an essential role in the initiation of DNA replication. This Dictyostelium discoideum (Social amoeba) protein is Probable DNA replication complex GINS protein PSF3 (gins3).